A 560-amino-acid chain; its full sequence is Membrane-bound O-acyltransferase GUP1 (560 aa).

Residues 1-43 are Extracellular-facing; sequence MSLISILSPLITSEGLDSRIKPSPKKDASTTTKPSLWKTTEFK. Residues 44 to 64 form a helical membrane-spanning segment; it reads FYYIAFLVVVPLMFYAGLQAS. Topologically, residues 65–101 are cytoplasmic; it reads SPENPNYARYERLLSQGWLFGRKVDNSDSQYRFFRDN. A helical membrane pass occupies residues 102 to 122; that stretch reads FALLSVLMLVHTSIKRIVLYS. The Extracellular portion of the chain corresponds to 123–131; the sequence is TNITKLRFD. A helical membrane pass occupies residues 132-152; sequence LIFGLIFLVAAHGVNSIRILA. The Cytoplasmic segment spans residues 153-165; sequence HMLILYAIAHVLK. Residues 166–185 form a helical membrane-spanning segment; the sequence is NFRRIATISIWIYGISTLFI. The Extracellular segment spans residues 186-276; that stretch reads NDNFRAYPFG…AAHPIQDYSL (91 aa). A helical transmembrane segment spans residues 277–297; that stretch reads MNYIAYVTYTPLFIAGPIITF. At 298–322 the chain is on the cytoplasmic side; sequence NDYVYQSKHTLPSINFKFIFYYAVR. A helical membrane pass occupies residues 323-343; it reads FVIALLSMEFILHFLHVVAIS. Residues 344–352 are Extracellular-facing; the sequence is KTKAWENDT. Residues 353–373 traverse the membrane as a helical segment; that stretch reads PFQISMIGLFNLNIIWLKLLI. Residues 374–432 are Cytoplasmic-facing; the sequence is PWRLFRLWALLDGIDTPENMIRCVDNNYSSLAFWRAWHRSYNKWVVRYIYIPLGGSKNR. 2 helical membrane-spanning segments follow: residues 433–453 and 454–474; these read VLTSLAVFSFVAIWHDIELKL and LLWGWLIVLFLLPEIFATQIF. Residue His-447 is part of the active site. The Cytoplasmic segment spans residues 475 to 485; that stretch reads SHYTDAVWYRH. Residues 486–506 traverse the membrane as a helical segment; the sequence is VCAVGAVFNIWVMMIANLFGF. Over 507-526 the chain is Extracellular; the sequence is CLGSDGTKKLLSDMFCTVSG. A helical transmembrane segment spans residues 527 to 547; it reads FKFVILASVSLFIAVQIMFEI. Residues 548–560 are Cytoplasmic-facing; sequence REEEKRHGIYLKC.

Belongs to the membrane-bound acyltransferase family. In terms of assembly, interacts with mitochondrial outer membrane voltage-dependent anion channel (VDAC) POR1.

Its subcellular location is the cell membrane. It is found in the endoplasmic reticulum membrane. It localises to the mitochondrion membrane. In terms of biological role, membrane-bound O-acyltransferase involved in the remodeling of glycosylphosphatidylinositol (GPI) anchors. Acts only on GPI-anchored proteins, but not on free GPI lipids. Acts as an acyltransferase for GPI anchors that adds C26 fatty acids to the sn2 position of lyso-PI-containing GPI anchors. PER1 first deacylates, GUP1 subsequently reacylates the anchor lipid, thus replacing a shorter fatty acid (C16:0 or C18:0) by C26:0. Also involved in lipid metabolism, having profound effects on sphingolipid-sterol-ordered domains integrity and assembly. Together with GUP2, has an influence on the chemical composition of the yeast extracellular matrix (yECM) in yeast multicellular aggregates, such as biofilms and colonies. Involved in cell integrity and apoptosis. This Saccharomyces cerevisiae (strain ATCC 204508 / S288c) (Baker's yeast) protein is Membrane-bound O-acyltransferase GUP1 (GUP1).